Consider the following 407-residue polypeptide: Chorismate synthase (407 aa).

NADP(+) contacts are provided by Arg-40 and Arg-46. FMN contacts are provided by residues 138 to 140 (RAS) and 259 to 260 (QA). A compositionally biased stretch (basic and acidic residues) spans 275–284 (RRGSRAHDEM). The interval 275-308 (RRGSRAHDEMYPGTDGVVRSTNRAGGLEGGMTNG) is disordered. FMN-binding positions include Gly-303, 318 to 322 (KPIST), and Arg-344.

This sequence belongs to the chorismate synthase family. Homotetramer. The cofactor is FMNH2.

It catalyses the reaction 5-O-(1-carboxyvinyl)-3-phosphoshikimate = chorismate + phosphate. Its pathway is metabolic intermediate biosynthesis; chorismate biosynthesis; chorismate from D-erythrose 4-phosphate and phosphoenolpyruvate: step 7/7. Catalyzes the anti-1,4-elimination of the C-3 phosphate and the C-6 proR hydrogen from 5-enolpyruvylshikimate-3-phosphate (EPSP) to yield chorismate, which is the branch point compound that serves as the starting substrate for the three terminal pathways of aromatic amino acid biosynthesis. This reaction introduces a second double bond into the aromatic ring system. This chain is Chorismate synthase, found in Mycobacterium marinum (strain ATCC BAA-535 / M).